A 200-amino-acid chain; its full sequence is NADH-quinone oxidoreductase subunit C (200 aa).

This sequence belongs to the complex I 30 kDa subunit family. NDH-1 is composed of 14 different subunits. Subunits NuoB, C, D, E, F, and G constitute the peripheral sector of the complex.

It is found in the cell inner membrane. The catalysed reaction is a quinone + NADH + 5 H(+)(in) = a quinol + NAD(+) + 4 H(+)(out). In terms of biological role, NDH-1 shuttles electrons from NADH, via FMN and iron-sulfur (Fe-S) centers, to quinones in the respiratory chain. The immediate electron acceptor for the enzyme in this species is believed to be ubiquinone. Couples the redox reaction to proton translocation (for every two electrons transferred, four hydrogen ions are translocated across the cytoplasmic membrane), and thus conserves the redox energy in a proton gradient. The chain is NADH-quinone oxidoreductase subunit C from Burkholderia thailandensis (strain ATCC 700388 / DSM 13276 / CCUG 48851 / CIP 106301 / E264).